A 238-amino-acid chain; its full sequence is Proenkephalin-A (238 aa).

Positions Met-1–Thr-25 are cleaved as a signal peptide. 3 cysteine pairs are disulfide-bonded: Cys-27/Cys-50, Cys-31/Cys-54, and Cys-34/Cys-66. The tract at residues Gln-76 to His-103 is disordered. 3 consecutive propeptides follow at residues Ser-124–Val-167, Ala-177–Leu-195, and Val-206–Gln-230.

The protein belongs to the opioid neuropeptide precursor family. In terms of tissue distribution, expressed by the venom gland. Moderately expressed in the venom gland transcriptome.

It is found in the secreted. In terms of biological role, met-enkephalins compete with and mimic the effects of opiate drugs. They play a role in a number of physiologic functions, including pain perception and responses to stress. Enkephalin peptides found in Meiacanthus fangblennies induce physiological effects via their interaction with delta-type opioid receptors (OPRD1) (tested on M.grammistes). Therefore, finding a proenkephalin sequence in M.atrodorsalis venom suggests that this protein act in the same manner. This is Proenkephalin-A from Meiacanthus atrodorsalis (Forktail blenny).